A 512-amino-acid polypeptide reads, in one-letter code: 2-isopropylmalate synthase (512 aa).

A Pyruvate carboxyltransferase domain is found at 4–266 (IQFFDTTLRD…ETNIVLNQFK (263 aa)). Residues Asp-13, His-201, His-203, and Asn-237 each coordinate Mn(2+). The regulatory domain stretch occupies residues 390–512 (ELKHLQVQYV…SKQADFEEVK (123 aa)).

The protein belongs to the alpha-IPM synthase/homocitrate synthase family. LeuA type 1 subfamily. Homodimer. Requires Mn(2+) as cofactor.

The protein localises to the cytoplasm. It carries out the reaction 3-methyl-2-oxobutanoate + acetyl-CoA + H2O = (2S)-2-isopropylmalate + CoA + H(+). The protein operates within amino-acid biosynthesis; L-leucine biosynthesis; L-leucine from 3-methyl-2-oxobutanoate: step 1/4. In terms of biological role, catalyzes the condensation of the acetyl group of acetyl-CoA with 3-methyl-2-oxobutanoate (2-ketoisovalerate) to form 3-carboxy-3-hydroxy-4-methylpentanoate (2-isopropylmalate). The polypeptide is 2-isopropylmalate synthase (Listeria monocytogenes serotype 4a (strain HCC23)).